Here is a 262-residue protein sequence, read N- to C-terminus: MIDKTAFVHPTAIVEEGAVIGANVHIGPFCIVGANVEIGEGTVLKSHVVVNGHTKIGRDNEIYQFASIGEVNQDLKYAGEPTRVEIGDRNRIRESVTIHRGTVQGGGLTKVGNDNLLMINAHVAHDCTLGDRCILANNATLAGHVSLDDFVIIGGMTAVHQFCIIGAHVMVGGCSGVAQDVPPFVIAQGNHATPFGVNIEGLKRRGFSREAITAIRNAYKLLYRSGKTLDEAKPEIAELATQHPEVQPFVDFFARSTRGLIR.

This sequence belongs to the transferase hexapeptide repeat family. LpxA subfamily. Homotrimer.

It is found in the cytoplasm. The enzyme catalyses a (3R)-hydroxyacyl-[ACP] + UDP-N-acetyl-alpha-D-glucosamine = a UDP-3-O-[(3R)-3-hydroxyacyl]-N-acetyl-alpha-D-glucosamine + holo-[ACP]. Its pathway is glycolipid biosynthesis; lipid IV(A) biosynthesis; lipid IV(A) from (3R)-3-hydroxytetradecanoyl-[acyl-carrier-protein] and UDP-N-acetyl-alpha-D-glucosamine: step 1/6. In terms of biological role, involved in the biosynthesis of lipid A, a phosphorylated glycolipid that anchors the lipopolysaccharide to the outer membrane of the cell. In Klebsiella pneumoniae (strain 342), this protein is Acyl-[acyl-carrier-protein]--UDP-N-acetylglucosamine O-acyltransferase.